The primary structure comprises 105 residues: Met repressor (105 aa).

The protein belongs to the MetJ family. In terms of assembly, homodimer.

The protein localises to the cytoplasm. Functionally, this regulatory protein, when combined with SAM (S-adenosylmethionine) represses the expression of the methionine regulon and of enzymes involved in SAM synthesis. This chain is Met repressor, found in Vibrio vulnificus (strain CMCP6).